A 279-amino-acid polypeptide reads, in one-letter code: Thymidylate synthase (279 aa).

Residue 132–133 (RR) participates in dUMP binding. The active-site Nucleophile is C153. DUMP-binding positions include 178–181 (RSND), N189, and 219–221 (HIY). Residue D181 participates in (6R)-5,10-methylene-5,6,7,8-tetrahydrofolate binding. A278 is a binding site for (6R)-5,10-methylene-5,6,7,8-tetrahydrofolate.

It belongs to the thymidylate synthase family. Bacterial-type ThyA subfamily. Homodimer.

It is found in the cytoplasm. The catalysed reaction is dUMP + (6R)-5,10-methylene-5,6,7,8-tetrahydrofolate = 7,8-dihydrofolate + dTMP. The protein operates within pyrimidine metabolism; dTTP biosynthesis. In terms of biological role, catalyzes the reductive methylation of 2'-deoxyuridine-5'-monophosphate (dUMP) to 2'-deoxythymidine-5'-monophosphate (dTMP) while utilizing 5,10-methylenetetrahydrofolate (mTHF) as the methyl donor and reductant in the reaction, yielding dihydrofolate (DHF) as a by-product. This enzymatic reaction provides an intracellular de novo source of dTMP, an essential precursor for DNA biosynthesis. The chain is Thymidylate synthase from Lactococcus lactis subsp. lactis (strain IL1403) (Streptococcus lactis).